The chain runs to 150 residues: MQVILLEKVVNLGNLGEIVKVKDGYARNFLIPQRKARRATTAAVAEFEVKRAELEKIAAEKLAASQAQGEKLTGQTVQISQKSGVDGRLFGSVTNADIAVALTKQGFAVEKAQVRMPTGPLKVTGDHTVAVALHTDVVIEVTITIVGEHA.

Belongs to the bacterial ribosomal protein bL9 family.

Binds to the 23S rRNA. The sequence is that of Large ribosomal subunit protein bL9 from Herminiimonas arsenicoxydans.